Here is a 408-residue protein sequence, read N- to C-terminus: Putative gustatory receptor 58b (408 aa).

At 1-44 the chain is on the cytoplasmic side; sequence MLHPKLGRVMNVVYYHSVVFALMSTTLRIRSCRKCLRLEKVSRT. Residues 45-65 traverse the membrane as a helical segment; that stretch reads YTIYSFFVGIFLFLNLYFMVP. Residues 66–82 are Extracellular-facing; sequence RIMEDGYMKYNIVLQWN. The chain crosses the membrane as a helical span at residues 83-103; it reads FFVMLFLRAIAVVSCYGTLWL. The Cytoplasmic segment spans residues 104–150; that stretch reads KRHKIIQLYKYSLIYWKRFGHITRAIVDKKELLDLQESLARIMIRKI. The chain crosses the membrane as a helical span at residues 151-171; the sequence is ILLYSAFLCSTVLQYQLLSVI. The Extracellular portion of the chain corresponds to 172–193; sequence NPQIFLAFCARLTHFLHFLCVK. Residues 194 to 214 traverse the membrane as a helical segment; sequence MGFFGVLVLLNHQFLVIHLAI. The Cytoplasmic portion of the chain corresponds to 215–245; that stretch reads NALHGRKARKKWKALRSVAAMHLKTLRLARR. Residues 246–266 traverse the membrane as a helical segment; the sequence is IFDMFDIANATVFINMFMTAI. Residues 267–284 lie on the Extracellular side of the membrane; it reads NILYHAVQYSNSSIKSNG. N-linked (GlcNAc...) asparagine glycosylation is present at N277. Residues 285 to 305 traverse the membrane as a helical segment; it reads WGILFGNGLIVFNFWGTMALM. At 306–364 the chain is on the cytoplasmic side; that stretch reads EMLDSVVTSCNNTGQQLRQLSDLPKVGPKMQRELDVFTMQLRQNRLVYKICGIVELDKP. A helical membrane pass occupies residues 365 to 385; it reads ACLSYIGSILSNVIILMQFDL. At 386–408 the chain is on the extracellular side; it reads RRQRQPINDRQYLIHLMKNKTKV. Residue N404 is glycosylated (N-linked (GlcNAc...) asparagine).

It belongs to the insect chemoreceptor superfamily. Gustatory receptor (GR) family. Gr22e subfamily. Expressed in the adult labellar chemosensory neurons, labral sense organ and thorax. In larvae, is in neurons of the terminal external chemosensory organ as well as in the dorsal pharyngeal sense organ.

Its subcellular location is the cell membrane. In terms of biological role, probable gustatory receptor which mediates acceptance or avoidance behavior, depending on its substrates. The polypeptide is Putative gustatory receptor 58b (Gr58b) (Drosophila melanogaster (Fruit fly)).